A 394-amino-acid polypeptide reads, in one-letter code: Dihydroorotase (394 aa).

6 residues coordinate Zn(2+): H15, H17, K98, H135, H175, and D245. N6-carboxylysine is present on K98.

The protein belongs to the metallo-dependent hydrolases superfamily. DHOase family. Class II DHOase subfamily. It depends on Zn(2+) as a cofactor.

It catalyses the reaction (S)-dihydroorotate + H2O = N-carbamoyl-L-aspartate + H(+). It functions in the pathway pyrimidine metabolism; UMP biosynthesis via de novo pathway; (S)-dihydroorotate from bicarbonate: step 3/3. The protein is Dihydroorotase (PYR3) of Mycosarcoma maydis (Corn smut fungus).